The chain runs to 293 residues: Cytidine deaminase 8 (293 aa).

2 consecutive CMP/dCMP-type deaminase domains span residues phenylalanine 20–glutamine 151 and glutamate 181–lysine 293. Residue asparagine 61–glutamate 63 coordinates substrate. Histidine 74 contributes to the Zn(2+) binding site. The active-site Proton donor is glutamate 76. Positions 107 and 110 each coordinate Zn(2+).

It belongs to the cytidine and deoxycytidylate deaminase family. Homodimer. Zn(2+) is required as a cofactor.

It catalyses the reaction cytidine + H2O + H(+) = uridine + NH4(+). The enzyme catalyses 2'-deoxycytidine + H2O + H(+) = 2'-deoxyuridine + NH4(+). Its function is as follows. This enzyme scavenges exogenous and endogenous cytidine and 2'-deoxycytidine for UMP synthesis. The polypeptide is Cytidine deaminase 8 (CDA8) (Arabidopsis thaliana (Mouse-ear cress)).